Consider the following 176-residue polypeptide: Cytidylate kinase (176 aa).

7-15 (GPPGSGTTS) is an ATP binding site.

This sequence belongs to the cytidylate kinase family. Type 2 subfamily.

Its subcellular location is the cytoplasm. It catalyses the reaction CMP + ATP = CDP + ADP. The enzyme catalyses dCMP + ATP = dCDP + ADP. This Methanosphaerula palustris (strain ATCC BAA-1556 / DSM 19958 / E1-9c) protein is Cytidylate kinase.